Reading from the N-terminus, the 350-residue chain is FAD:protein FMN transferase (350 aa).

The signal sequence occupies residues 1–19 (MDMTFFRAALLGACVLLSG). C20 carries N-palmitoyl cysteine lipidation. Residue C20 is the site of S-diacylglycerol cysteine attachment. Residues M41, W78, 119–121 (AMD), and D181 each bind FAD. T184 contributes to the Mg(2+) binding site. FAD-binding residues include E187 and I272. Residues D298, D301, and T302 each coordinate Mg(2+).

It belongs to the ApbE family. Mg(2+) is required as a cofactor.

It is found in the cell inner membrane. The enzyme catalyses L-threonyl-[protein] + FAD = FMN-L-threonyl-[protein] + AMP + H(+). Functionally, flavin transferase that catalyzes the transfer of the FMN moiety of FAD and its covalent binding to the hydroxyl group of a threonine residue in a target flavoprotein such as NqrB and NqrC, two subunits of the NQR complex. The protein is FAD:protein FMN transferase of Klebsiella pneumoniae (strain 342).